The primary structure comprises 217 residues: Adenylate kinase (217 aa).

Residue 10–15 (GAGKGT) participates in ATP binding. Residues 30–59 (STGDMLRAQVKAGTALGLEAKKHMDAGGLV) are NMP. Residues threonine 31, arginine 36, 57 to 59 (GLV), 85 to 88 (GFPR), and glutamine 92 each bind AMP. The tract at residues 122–159 (GRRAHLASGRTYHVKFNPPKVEGIDDVTGEPLVQRDDD) is LID. ATP contacts are provided by residues arginine 123 and 132–133 (TY). AMP contacts are provided by arginine 156 and arginine 167. ATP is bound at residue glycine 203.

The protein belongs to the adenylate kinase family. As to quaternary structure, monomer.

It localises to the cytoplasm. The enzyme catalyses AMP + ATP = 2 ADP. The protein operates within purine metabolism; AMP biosynthesis via salvage pathway; AMP from ADP: step 1/1. Functionally, catalyzes the reversible transfer of the terminal phosphate group between ATP and AMP. Plays an important role in cellular energy homeostasis and in adenine nucleotide metabolism. This chain is Adenylate kinase, found in Dechloromonas aromatica (strain RCB).